A 530-amino-acid polypeptide reads, in one-letter code: Bifunctional purine biosynthesis protein PurH (530 aa).

An MGS-like domain is found at 1-148 (MNNARPIRRA…KNHKDVTIVV (148 aa)).

It belongs to the PurH family.

The catalysed reaction is (6R)-10-formyltetrahydrofolate + 5-amino-1-(5-phospho-beta-D-ribosyl)imidazole-4-carboxamide = 5-formamido-1-(5-phospho-D-ribosyl)imidazole-4-carboxamide + (6S)-5,6,7,8-tetrahydrofolate. The enzyme catalyses IMP + H2O = 5-formamido-1-(5-phospho-D-ribosyl)imidazole-4-carboxamide. The protein operates within purine metabolism; IMP biosynthesis via de novo pathway; 5-formamido-1-(5-phospho-D-ribosyl)imidazole-4-carboxamide from 5-amino-1-(5-phospho-D-ribosyl)imidazole-4-carboxamide (10-formyl THF route): step 1/1. It functions in the pathway purine metabolism; IMP biosynthesis via de novo pathway; IMP from 5-formamido-1-(5-phospho-D-ribosyl)imidazole-4-carboxamide: step 1/1. The protein is Bifunctional purine biosynthesis protein PurH of Vibrio vulnificus (strain YJ016).